A 2035-amino-acid chain; its full sequence is Host cell factor 1 (2035 aa).

Ala-2 carries the post-translational modification N-acetylalanine. Ser-6 bears the Phosphoserine mark. Kelch repeat units lie at residues 44–89 (LIVV…GFVC), 93–140 (RLLV…RLGH), 148–194 (KCYL…ITYG), 217–265 (KLVI…TIGN), and 266–313 (KMYV…LMDT). Glycyl lysine isopeptide (Lys-Gly) (interchain with G-Cter in ubiquitin) cross-links involve residues Lys-105, Lys-163, and Lys-244. A Glycyl lysine isopeptide (Lys-Gly) (interchain with G-Cter in SUMO2) cross-link involves residue Lys-282. At Lys-288 the chain carries N6-acetyllysine. Lys-363 is covalently cross-linked (Glycyl lysine isopeptide (Lys-Gly) (interchain with G-Cter in ubiquitin)). The Fibronectin type-III 1 domain occupies 366–466 (PPARVQLVRA…TTTTIQVLPT (101 aa)). Residues 407 to 434 (ATATSPTPNPVPSVPANPPKSPAPAAAA) are disordered. Ser-411 carries the phosphoserine modification. Residues 413–428 (TPNPVPSVPANPPKSP) are compositionally biased toward pro residues. Positions 500-550 (LVTMRPASQAGKAPVTVTSLPAGVRMVVPTQSAQGTVIGSSPQMSGMAALA) are required for interaction with OGT. Omega-N-methylarginine is present on residues Arg-504 and Arg-524. Phosphoserine occurs at positions 598, 666, and 669. The interaction with SIN3A stretch occupies residues 610-722 (LKTAAAQVGT…KGPLPAGTIL (113 aa)). The tract at residues 750–902 (ILGISSVSPS…SLAGAGGHST (153 aa)) is interaction with ZBTB17. N6-acetyllysine is present on Lys-813. The interval 813–912 (KIITAVPKIA…SASLATPITT (100 aa)) is interaction with GABP2. HCF repeat repeat units follow at residues 1010–1035 (TLVCSNPPCETHETGTTNTATTTVVA), 1072–1097 (VRVCSNPPCETHETGTTNTATTATSN), and 1101–1126 (QHGCSNPPCETHETGTTNTATTAMSS). One copy of the HCF repeat 4; degenerate repeat lies at 1158-1183 (AAQGSKSQCQTRQTSATSTTMTVMAT). The residue at position 1205 (Ser-1205) is a Phosphoserine. Arg-1219 is modified (omega-N-methylarginine). Phosphoserine is present on Ser-1224. HCF repeat repeat units follow at residues 1286–1311 (TQVCSNPPCETHETGTTNTATTSNAG) and 1314–1339 (QRVCSNPPCETHETGTTHTATTATSN). 3 disordered regions span residues 1292-1371 (PPCE…TMSV), 1435-1470 (TVTSNMSSNQDPPPAASDQGEVESTQGDSVNITSSS), and 1487-1515 (VTQSTPVPGPSVPPPEELQVSPGPRQQLP). Low complexity-rich tracts occupy residues 1299 to 1312 (TGTTNTATTSNAGS), 1329 to 1339 (TTHTATTATSN), and 1362 to 1371 (TTSTGTTMSV). An HCF repeat 7; degenerate repeat occupies 1349 to 1374 (QQPPAGRPCETHQTTSTGTTMSVSVG). The HCF repeat 8 repeat unit spans residues 1414–1439 (QRVCSNPPCETHETGTTHTATTVTSN). The residue at position 1491 (Thr-1491) is a Phosphothreonine. Residues 1493–1502 (VPGPSVPPPE) are compositionally biased toward pro residues. Residues Ser-1497, Ser-1507, and Ser-1771 each carry the phosphoserine modification. Fibronectin type-III domains lie at 1797 to 1888 (LPPP…TCLP) and 1890 to 2006 (FPGA…TSKD). Residues Lys-1807 and Lys-1808 each participate in a glycyl lysine isopeptide (Lys-Gly) (interchain with G-Cter in ubiquitin) cross-link. Ser-1838 is modified (phosphoserine). Residues 1994–2035 (ATQVRWLQETSKDSSGTKPANKRPMSSPEMKSAPKKSKADGQ) are disordered. An N6-acetyllysine modification is found at Lys-2005. Lys-2024 is covalently cross-linked (Glycyl lysine isopeptide (Lys-Gly) (interchain with G-Cter in SUMO2)).

Composed predominantly of six polypeptides ranging from 110 to 150 kDa and a minor 300 kDa polypeptide. The majority of N- and C-terminal cleavage products remain tightly, albeit non-covalently, associated. Interacts with POU2F1, CREB3, ZBTB17, EGR2, E2F4, CREBZF, SP1, GABP2, Sin3 HDAC complex (SIN3A, HDAC1, HDAC2, SUDS3), SAP30, SIN3B and FHL2. Component of a MLL1 complex, composed of at least the core components KMT2A/MLL1, ASH2L, HCFC1, WDR5 and RBBP5, as well as the facultative components BACC1, CHD8, DPY30, E2F6, HCFC2, HSP70, INO80C, KANSL1, LAS1L, MAX, MCRS1, MEN1, MGA, KAT8, PELP1, PHF20, PRP31, RING2, RUVBL1, RUVBL2, SENP3, TAF1, TAF4, TAF6, TAF7, TAF9 and TEX10. Component of a THAP1/THAP3-HCFC1-OGT complex that is required for the regulation of the transcriptional activity of RRM1. Interacts directly with THAP3 (via its HBM). Interacts (via the Kelch-repeat domain) with THAP1 (via the HBM); the interaction recruits HCHC1 to the RRM1. Interacts with THAP7 and THAP11 (via the HMB). Interacts directly with OGT; the interaction, which requires the HCFC1 cleavage site domain, glycosylates and promotes the proteolytic processing of HCFC1, retains OGT in the nucleus and impacts the expression of herpes simplex virus immediate early viral genes. Component of the SET1 complex, at least composed of the catalytic subunit (SETD1A or SETD1B), WDR5, WDR82, RBBP5, ASH2L, CXXC1, HCFC1 and DPY30. Component of the NSL complex at least composed of MOF/KAT8, KANSL1, KANSL2, KANSL3, MCRS1, PHF20, OGT1/OGT, WDR5 and HCFC1. Component of a complex at least composed of ZNF335, HCFC1, CCAR2, EMSY, MKI67, RBBP5, ASH2L and WDR5; the complex is formed as a result of interactions between components of a nuclear receptor-mediated transcription complex and a histone methylation complex. Within the complex interacts with ZNF335. Interacts with TET2 and TET3. Interacts with HCFC1R1. Interacts with THAP11. Interacts (via Kelch domain) with KMT2E/MLL5 isoform 3 (via HBM motif). Interacts with E2F1. Accessory scaffold component of the polycomb repressive deubiquitinase (PR-DUB) complex, at least composed of BAP1, one of ASXL1, ASXL2 or (probably) ASXL3 and one of MBD5 or MBD6; the PR-DUB core associates with a number of accessory proteins, including FOXK1, FOXK2, KDM1B, HCFC1, YY1 and OGT. Interacts with YY1 (via Gly-rich region); the interaction is direct. Interacts with BAP1 (via HBM-like motif). As to quaternary structure, (Microbial infection) Associates with the VP16-induced complex; binding to HCFC1 activates the viral transcriptional activator VP16 for association with POU2F1, to form a multiprotein-DNA complex responsible for activating transcription of the viral immediate early genes. Interacts with the viral transactivator protein VP16. Post-translationally, proteolytically cleaved at one or several PPCE--THET sites within the HCF repeats. Further cleavage of the primary N- and C-terminal chains results in a 'trimming' and accumulation of the smaller chains. Cleavage is promoted by O-glycosylation. In terms of processing, O-glycosylated. GlcNAcylation by OGT promotes proteolytic processing. Ubiquitinated. Lys-1807 and Lys-1808 are ubiquitinated both via 'Lys-48'- and 'Lys-63'-linked polyubiquitin chains. BAP1 mediated deubiquitination of 'Lys-48'-linked polyubiquitin chains; deubiquitination by BAP1 does not seem to stabilize the protein. As to expression, highly expressed in fetal tissues and the adult kidney. Present in all tissues tested.

The protein resides in the cytoplasm. The protein localises to the nucleus. In terms of biological role, transcriptional coregulator. Serves as a scaffold protein, bridging interactions between transcription factors, including THAP11 and ZNF143, and transcriptional coregulators. Involved in control of the cell cycle. Also antagonizes transactivation by ZBTB17 and GABP2; represses ZBTB17 activation of the p15(INK4b) promoter and inhibits its ability to recruit p300. Coactivator for EGR2 and GABP2. Tethers the chromatin modifying Set1/Ash2 histone H3 'Lys-4' methyltransferase (H3K4me) and Sin3 histone deacetylase (HDAC) complexes (involved in the activation and repression of transcription, respectively) together. Component of a THAP1/THAP3-HCFC1-OGT complex that is required for the regulation of the transcriptional activity of RRM1. As part of the NSL complex it may be involved in acetylation of nucleosomal histone H4 on several lysine residues. Recruits KMT2E/MLL5 to E2F1 responsive promoters promoting transcriptional activation and thereby facilitates G1 to S phase transition. Modulates expression of homeobox protein PDX1, perhaps acting in concert with transcription factor E2F1, thereby regulating pancreatic beta-cell growth and glucose-stimulated insulin secretion. May negatively modulate transcriptional activity of FOXO3. Functionally, (Microbial infection) In case of human herpes simplex virus (HSV) infection, HCFC1 forms a multiprotein-DNA complex with the viral transactivator protein VP16 and POU2F1 thereby enabling the transcription of the viral immediate early genes. The polypeptide is Host cell factor 1 (Homo sapiens (Human)).